The following is an 84-amino-acid chain: UPF0410 protein YmgE (84 aa).

The next 3 membrane-spanning stretches (helical) occupy residues 1–21 (MGII…KLIM), 27–47 (GGFF…GWLA), and 58–78 (GFNL…LGIF).

It belongs to the UPF0410 family.

Its subcellular location is the cell inner membrane. The sequence is that of UPF0410 protein YmgE (ymgE) from Escherichia coli (strain K12).